Here is a 146-residue protein sequence, read N- to C-terminus: Large ribosomal subunit protein uL15 (146 aa).

Residues 1–13 show a composition bias toward basic and acidic residues; the sequence is MKLHELKPAEGSR. Residues 1-51 form a disordered region; sequence MKLHELKPAEGSRKVRNRVGRGIGSGNGKTAGRGHKGQNARSGGGVRLGFE. Gly residues-rich tracts occupy residues 21–31 and 42–51; these read RGIGSGNGKTA and SGGGVRLGFE.

Belongs to the universal ribosomal protein uL15 family. Part of the 50S ribosomal subunit.

Functionally, binds to the 23S rRNA. The sequence is that of Large ribosomal subunit protein uL15 from Bacillus mycoides (strain KBAB4) (Bacillus weihenstephanensis).